Reading from the N-terminus, the 118-residue chain is Large ribosomal subunit protein bL20 (118 aa).

It belongs to the bacterial ribosomal protein bL20 family.

Functionally, binds directly to 23S ribosomal RNA and is necessary for the in vitro assembly process of the 50S ribosomal subunit. It is not involved in the protein synthesizing functions of that subunit. This Lactobacillus delbrueckii subsp. bulgaricus (strain ATCC BAA-365 / Lb-18) protein is Large ribosomal subunit protein bL20.